Here is a 514-residue protein sequence, read N- to C-terminus: MSEKEEAPSTSKSTGAPSRPTLSLPPRPFSEMFFNGGVGFSPGPMTLVSNMFPDSDEFRSFSQLLAGAMSSPATAAAAAAAATASDYQRLGEGTNSSSGDVDPRFKQNRPTGLMISQSQSPSMFTVPPGLSPAMLLDSPSFLGLFSPVQGSYGMTHQQALAQVTAQAVQANANMQPQTEYPPPSQVQSFSSGQAQIPTSAPLPAQRETSDVTIIEHRSQQPLNVDKPADDGYNWRKYGQKQVKGSEFPRSYYKCTNPGCPVKKKVERSLDGQVTEIIYKGQHNHEPPQNTKRGNKDNTANINGSSINNNRGSSELGASQFQTNSSNKTKREQHEAVSQATTTEHLSEASDGEEVGNGETDVREKDENEPDPKRRSTEVRISEPAPAASHRTVTEPRIIVQTTSEVDLLDDGYRWRKYGQKVVKGNPYPRSYYKCTTPGCGVRKHVERAATDPKAVVTTYEGKHNHDLPAAKSSSHAAAAAQLRPDNRPGGLANLNQQQQQQPVARLRLKEEQTT.

Disordered regions lie at residues 1–28, 175–204, and 278–394; these read MSEK…PPRP, QPQT…PLPA, and YKGQ…TVTE. Polar residues-rich tracts occupy residues 185 to 198 and 286 to 299; these read QVQS…QIPT and PPQN…DNTA. Residues 223–287 constitute a DNA-binding region (WRKY 1); sequence NVDKPADDGY…YKGQHNHEPP (65 aa). Low complexity predominate over residues 300–313; the sequence is NINGSSINNNRGSS. Positions 315 to 326 are enriched in polar residues; it reads LGASQFQTNSSN. Residues 359-380 show a composition bias toward basic and acidic residues; that stretch reads TDVREKDENEPDPKRRSTEVRI. The WRKY 2 DNA-binding region spans 403-468; sequence SEVDLLDDGY…YEGKHNHDLP (66 aa). 5 residues coordinate Zn(2+): C434, T436, C439, H463, and H465. The segment at 464-514 is disordered; that stretch reads NHDLPAAKSSSHAAAAAQLRPDNRPGGLANLNQQQQQQPVARLRLKEEQTT. The segment covering 469-480 has biased composition (low complexity); sequence AAKSSSHAAAAA.

In terms of tissue distribution, in young, mature and senescent leaves.

The protein resides in the nucleus. Functionally, transcription factor that binds specifically to the W box (5'-(T)TGAC[CT]-3'), a frequently occurring elicitor-responsive cis-acting element. Has a positive role in resistance to necrotrophic pathogens (e.g. Botrytis cinerea), but a negative effect on plant resistance to biotrophic pathogens (e.g. Pseudomonas syringae). The protein is Probable WRKY transcription factor 4 (WRKY4) of Arabidopsis thaliana (Mouse-ear cress).